Consider the following 236-residue polypeptide: LexA repressor (236 aa).

Residues 26 to 46 constitute a DNA-binding region (H-T-H motif); that stretch reads FDEMKEALDLRSKSGIHRLIT. Active-site for autocatalytic cleavage activity residues include Ser-157 and Lys-195.

This sequence belongs to the peptidase S24 family. Homodimer.

It catalyses the reaction Hydrolysis of Ala-|-Gly bond in repressor LexA.. Represses a number of genes involved in the response to DNA damage (SOS response), including recA and lexA. In the presence of single-stranded DNA, RecA interacts with LexA causing an autocatalytic cleavage which disrupts the DNA-binding part of LexA, leading to derepression of the SOS regulon and eventually DNA repair. In Azorhizobium caulinodans (strain ATCC 43989 / DSM 5975 / JCM 20966 / LMG 6465 / NBRC 14845 / NCIMB 13405 / ORS 571), this protein is LexA repressor.